The following is a 254-amino-acid chain: MSLARGHGDTAASTAAPLSEEGEVTSGLQALAVEDTGGPSASAGKAEDEGEGGREETEREGSGGEEAQGEVPSAGGEEPAEEDSEDWCVPCSDEEVELPADGQPWMPPPSEIQRLYELLAAHGTLELQAEILPRRPPTPEAQSEEERSDEEPEAKEEEEEKPHMPTEFDFDDEPVTPKDSLIDRRRTPGSSARSQKREARLDKVLSDMKRHKKLEEQILRTGRDLFSLDSEDPSPASPPLRSSGSSLFPRQRKY.

Disordered stretches follow at residues 1–111 and 127–254; these read MSLA…PPSE and LQAE…QRKY. The segment covering 45–62 has biased composition (basic and acidic residues); sequence KAEDEGEGGREETEREGS. The segment covering 78-98 has biased composition (acidic residues); it reads EPAEEDSEDWCVPCSDEEVEL. The sufficient for interaction with NCOA1 stretch occupies residues 116–160; sequence YELLAAHGTLELQAEILPRRPPTPEAQSEEERSDEEPEAKEEEEE. Threonine 138 is subject to Phosphothreonine. Residues 142–159 are compositionally biased toward acidic residues; that stretch reads QSEEERSDEEPEAKEEEE. Phosphoserine occurs at positions 143 and 148. Positions 161 to 254 are sufficient for interaction with ESR1; that stretch reads KPHMPTEFDF…SSLFPRQRKY (94 aa). Residues 195-223 show a composition bias toward basic and acidic residues; the sequence is QKREARLDKVLSDMKRHKKLEEQILRTGR. Position 237 is a phosphoserine (serine 237).

Component of the KMT2 family MLL2/MLL3 complex (also named ASCOM complex), at least composed of the HMTs KMT2D and/or KMT2C, the common subunits ASH2L, RBBP5, WDR5 and DPY30, and the complex type-specific subunits PAXIP1/PTIP, PAGR1, NCOA6 and KDM6A; PAXIP1 is required for the association with the MLL2/MLL3 complex. Forms a constitutive complex with PAXIP1/PTIP independently of the MLL2/MLL3 complex. Interacts with NCOA1, ESR1, NR3C1, AR. As to expression, ubiquitously expressed.

It localises to the nucleus. Its function is as follows. Its association with the histone methyltransferase MLL2/MLL3 complex is suggesting a role in epigenetic transcriptional activation. However, in association with PAXIP1/PTIP is proposed to function at least in part independently of the MLL2/MLL3 complex. Proposed to be recruited by PAXIP1 to sites of DNA damage where the PAGR1:PAXIP1 complex is required for cell survival in response to DNA damage independently of the MLL2/MLL3 complex. However, its function in DNA damage has been questioned. During immunoglobulin class switching in activated B-cells is involved in transcription regulation of downstream switch regions at the immunoglobulin heavy-chain (Igh) locus independently of the MLL2/MLL3 complex. Involved in both estrogen receptor-regulated gene transcription and estrogen-stimulated G1/S cell-cycle transition. Acts as a transcriptional cofactor for nuclear hormone receptors. Inhibits the induction properties of several steroid receptors such as NR3C1, AR and PPARG; the mechanism of inhibition appears to be gene-dependent. This Homo sapiens (Human) protein is PAXIP1-associated glutamate-rich protein 1 (PAGR1).